The primary structure comprises 698 residues: MARLVAVCRDGEEEFPFEKRQIPLYIDDTLTMVMEFPDNVLNLDGHQNNGAQLKQFIQRHSMLKQQDLNIAMMVTSREVLSALSQLVPCVGCRRSVERLFSQLVESGNPALEPLAVGPKGVLSVTRSCMTDAKKLYTLFYVHGSKLNDMIDAIPKSKKNKRCQLHSLDTHKPKPLGGCWMDVWELMSQECRDEVVLIDSSCLLETLETYLRKHRFCTDCKNKVLRAYNILIGELDCSKEKGYCAALYEGLRCCPHERHIHVCCETDFIAHLLGRAEPEFAGGRRERHAKTIDIAQEEVLTCLGIHLYERLHRIWQKLRAEEQTWQMLFYLGVDALRKSFEMAVEKVQGISRLEQLCEEFSEEERVRELKQEKKRQKRKNRRKNKCVCEIPTPLQAAEEKEINQAKENLDFTENSCKACGSTEEANNCVEVIVTNESTSCTCPSSGTLLGSPKIKKGLSPHCNGSDCGYSSSMEGSETGSREGSDVACTEGICNHDENGDDSCVHRCDDKEEDGDSCVECWANSEESNTKGKNKKKKKKSKTLKCENEHIQKLGSCMADPGNRETSGNTTHTEFHRDKTKDTHAESCCSSEKSGQQLPWFEHMKNVSQFAEPTEMSLVPDTGKGAKSLVELLDESECTSDEEIFISQDEIQSFMANNKSFYSNREQYRQHLKEKFNKYCRLNDHKRPICNGWLTTAGAN.

The interval 555–575 (CMADPGNRETSGNTTHTEFHR) is disordered.

The protein localises to the cytoplasm. May be involved in spermatogenesis. The chain is Gametogenetin-binding protein 2 (GGNBP2) from Gallus gallus (Chicken).